The sequence spans 154 residues: 6,7-dimethyl-8-ribityllumazine synthase (154 aa).

5-amino-6-(D-ribitylamino)uracil-binding positions include phenylalanine 21, 55–57 (AFE), and 79–81 (CVI). 84-85 (AT) contacts (2S)-2-hydroxy-3-oxobutyl phosphate. Histidine 87 serves as the catalytic Proton donor. Residue phenylalanine 112 participates in 5-amino-6-(D-ribitylamino)uracil binding. Residue arginine 126 coordinates (2S)-2-hydroxy-3-oxobutyl phosphate.

The protein belongs to the DMRL synthase family. Forms an icosahedral capsid composed of 60 subunits, arranged as a dodecamer of pentamers.

It catalyses the reaction (2S)-2-hydroxy-3-oxobutyl phosphate + 5-amino-6-(D-ribitylamino)uracil = 6,7-dimethyl-8-(1-D-ribityl)lumazine + phosphate + 2 H2O + H(+). It participates in cofactor biosynthesis; riboflavin biosynthesis; riboflavin from 2-hydroxy-3-oxobutyl phosphate and 5-amino-6-(D-ribitylamino)uracil: step 1/2. Its function is as follows. Catalyzes the formation of 6,7-dimethyl-8-ribityllumazine by condensation of 5-amino-6-(D-ribitylamino)uracil with 3,4-dihydroxy-2-butanone 4-phosphate. This is the penultimate step in the biosynthesis of riboflavin. This chain is 6,7-dimethyl-8-ribityllumazine synthase, found in Staphylococcus aureus (strain Newman).